Consider the following 264-residue polypeptide: Putative [LysW]-aminoadipate/[LysW]-glutamate kinase (264 aa).

Substrate is bound by residues 34 to 35 (GG), arginine 61, and asparagine 169.

This sequence belongs to the acetylglutamate kinase family. LysZ subfamily.

The protein resides in the cytoplasm. The catalysed reaction is [amino-group carrier protein]-C-terminal-N-(1,4-dicarboxybutan-1-yl)-L-glutamine + ATP = [amino-group carrier protein]-C-terminal-N-(1-carboxy-5-phosphooxy-5-oxopentan-1-yl)-L-glutamine + ADP. The enzyme catalyses [amino-group carrier protein]-C-terminal-gamma-(L-glutamyl)-L-glutamate + ATP = [amino-group carrier protein]-C-terminal-gamma-(5-phospho-L-glutamyl)-L-glutamate + ADP. It participates in amino-acid biosynthesis; L-lysine biosynthesis via AAA pathway; L-lysine from L-alpha-aminoadipate (Thermus route): step 2/5. Its pathway is amino-acid biosynthesis; L-arginine biosynthesis. Functionally, involved in both the arginine and lysine biosynthetic pathways. Phosphorylates the LysW-bound precursors glutamate (for arginine biosynthesis), respectively alpha-aminoadipate (for lysine biosynthesis). This Ignicoccus hospitalis (strain KIN4/I / DSM 18386 / JCM 14125) protein is Putative [LysW]-aminoadipate/[LysW]-glutamate kinase.